The sequence spans 570 residues: Probable metalloreductase AIM14 (570 aa).

7 helical membrane passes run 21-41 (IKYGYYVLIISLVYLIGLALL), 70-90 (AIHLGILFFAVLIPFYYHYSL), 101-118 (LGRLSYALIPLNLFLTLR), 142-162 (IITVIGLLHGIFFIIKWAIDD), 177-197 (FVGFIISILVLFLLICSIGPM), 204-224 (LFYIVHNLVNVAFILLTPIHS), and 230-250 (FPFLLLNCTLLFIHIINRIVF). One can recognise a Ferric oxidoreductase domain in the interval 101–219 (LGRLSYALIP…NLVNVAFILL (119 aa)). Positions 250–388 (FAKSLMILNK…GGSGISFALP (139 aa)) constitute an FAD-binding FR-type domain. A compositionally biased stretch (polar residues) spans 481–505 (SNFNSENADSNDNTPETSHSPTKEN). A disordered region spans residues 481 to 507 (SNFNSENADSNDNTPETSHSPTKENGS).

The protein belongs to the ferric reductase (FRE) family. AIM14 subfamily. In terms of assembly, interacts with ribosomes.

It localises to the membrane. In terms of biological role, probable cell surface metalloreductase. May be involved in iron or copper homeostasis. In Saccharomyces cerevisiae (strain YJM789) (Baker's yeast), this protein is Probable metalloreductase AIM14 (AIM14).